The chain runs to 133 residues: Small ribosomal subunit protein uS8 (133 aa).

The protein belongs to the universal ribosomal protein uS8 family. Part of the 30S ribosomal subunit. Contacts proteins S5 and S12.

Its function is as follows. One of the primary rRNA binding proteins, it binds directly to 16S rRNA central domain where it helps coordinate assembly of the platform of the 30S subunit. This Micrococcus luteus (Micrococcus lysodeikticus) protein is Small ribosomal subunit protein uS8.